A 447-amino-acid polypeptide reads, in one-letter code: N-succinylarginine dihydrolase (447 aa).

Substrate contacts are provided by residues 19–28 (AGLSFGNEAS), Asn-110, and 137–138 (HR). Glu-174 is a catalytic residue. Residue Arg-212 coordinates substrate. Residue His-248 is part of the active site. The substrate site is built by Asp-250 and Asn-359. The active-site Nucleophile is Cys-365.

This sequence belongs to the succinylarginine dihydrolase family. In terms of assembly, homodimer.

The enzyme catalyses N(2)-succinyl-L-arginine + 2 H2O + 2 H(+) = N(2)-succinyl-L-ornithine + 2 NH4(+) + CO2. It participates in amino-acid degradation; L-arginine degradation via AST pathway; L-glutamate and succinate from L-arginine: step 2/5. Catalyzes the hydrolysis of N(2)-succinylarginine into N(2)-succinylornithine, ammonia and CO(2). This chain is N-succinylarginine dihydrolase, found in Shigella boydii serotype 4 (strain Sb227).